A 611-amino-acid polypeptide reads, in one-letter code: Protein ral2 (611 aa).

3 Kelch repeats span residues 43 to 91, 96 to 149, and 175 to 224; these read EAFV…HSGD, KLIF…EVNG, and YLII…VINK. Residue S604 is modified to Phosphoserine.

Its function is as follows. Essential for mating and for recognition of the mating pheromone, and for the determination of cell shape. Implicated in activation of the ras1 protein. This Schizosaccharomyces pombe (strain 972 / ATCC 24843) (Fission yeast) protein is Protein ral2 (ral2).